Here is a 782-residue protein sequence, read N- to C-terminus: Translation initiation factor IF-2 (782 aa).

Positions 47 to 196 (DNAIDGTNKK…TPPKPKELPE (150 aa)) are disordered. Basic and acidic residues predominate over residues 53-65 (TNKKAEAPKKETT). Polar residues predominate over residues 66–81 (SNENGNSKGPNKPNMT). Composition is skewed to low complexity over residues 82 to 93 (NSNEKSNKPNNP) and 118 to 170 (NTSK…NNKG). Residues 283-452 (ERPPVVTIMG…LLVSEVEELK (170 aa)) form the tr-type G domain. The segment at 292–299 (GHVDHGKT) is G1. Position 292–299 (292–299 (GHVDHGKT)) interacts with GTP. Residues 317–321 (GITQH) form a G2 region. A G3 region spans residues 338–341 (DTPG). GTP is bound by residues 338–342 (DTPGH) and 392–395 (NKID). Residues 392 to 395 (NKID) form a G4 region. The interval 428–430 (SAK) is G5.

This sequence belongs to the TRAFAC class translation factor GTPase superfamily. Classic translation factor GTPase family. IF-2 subfamily.

It is found in the cytoplasm. In terms of biological role, one of the essential components for the initiation of protein synthesis. Protects formylmethionyl-tRNA from spontaneous hydrolysis and promotes its binding to the 30S ribosomal subunits. Also involved in the hydrolysis of GTP during the formation of the 70S ribosomal complex. The sequence is that of Translation initiation factor IF-2 from Listeria monocytogenes serotype 4b (strain CLIP80459).